Here is a 236-residue protein sequence, read N- to C-terminus: Peptidase E (236 aa).

Catalysis depends on charge relay system residues Ser-122, Asp-137, and His-159.

It belongs to the peptidase S51 family.

The protein localises to the cytoplasm. It carries out the reaction Dipeptidase E catalyzes the hydrolysis of dipeptides Asp-|-Xaa. It does not act on peptides with N-terminal Glu, Asn or Gln, nor does it cleave isoaspartyl peptides.. In terms of biological role, hydrolyzes dipeptides containing N-terminal aspartate residues. May play a role in allowing the cell to use peptide aspartate to spare carbon otherwise required for the synthesis of the aspartate family of amino acids. The protein is Peptidase E of Shewanella sp. (strain ANA-3).